The chain runs to 750 residues: Neprilysin (750 aa).

Gly2 carries N-myristoyl glycine lipidation. Over 2–28 the chain is Cytoplasmic; the sequence is GRSESQMDITDINAPKPKKKQRWTPLE. 2 positions are modified to phosphoserine: Ser4 and Ser6. Positions 16–23 match the Stop-transfer sequence motif; it reads PKPKKKQR. The chain crosses the membrane as a helical; Signal-anchor for type II membrane protein span at residues 29–51; the sequence is ISLSVLVLLLTIIAVTMIALYAT. The Extracellular segment spans residues 52–750; that stretch reads YDDGICKSSD…MNPERKCRVW (699 aa). The Peptidase M13 domain occupies 56-750; it reads ICKSSDCIKS…MNPERKCRVW (695 aa). 6 disulfide bridges follow: Cys57–Cys62, Cys80–Cys735, Cys88–Cys695, Cys143–Cys411, Cys234–Cys242, and Cys621–Cys747. Arg103 provides a ligand contact to a peptide. N-linked (GlcNAc...) asparagine glycosylation is found at Asn145 and Asn211. Asn285, Asn311, and Asn325 each carry an N-linked (GlcNAc...) asparagine glycan. His584 serves as a coordination point for Zn(2+). The active site involves Glu585. Zn(2+) is bound at residue His588. N-linked (GlcNAc...) asparagine glycosylation occurs at Asn628. Glu647 serves as a coordination point for Zn(2+). Asp651 serves as the catalytic Proton donor.

Belongs to the peptidase M13 family. The cofactor is Zn(2+). In terms of processing, myristoylation is a determinant of membrane targeting. Post-translationally, glycosylation at Asn-628 is necessary both for surface expression and neutral endopeptidase activity.

It is found in the cell membrane. It carries out the reaction Preferential cleavage of polypeptides between hydrophobic residues, particularly with Phe or Tyr at P1'.. The catalysed reaction is substance P + H2O = substance P(1-9) + L-Leu-L-Met-NH2. It catalyses the reaction substance P + H2O = substance P(1-7) + L-Phe-Gly-L-Leu-L-Met-NH2. The enzyme catalyses neurotensin + H2O = neurotensin(1-11) + L-isoleucyl-L-leucine. It carries out the reaction neurotensin + H2O = neurotensin(1-10) + L-tyrosyl-L-isoleucyl-L-leucine. Thermolysin-like specificity, but is almost confined on acting on polypeptides of up to 30 amino acids. Biologically important in the destruction of opioid peptides such as Met- and Leu-enkephalins by cleavage of a Gly-Phe bond. Catalyzes cleavage of bradykinin, substance P and neurotensin peptides. Able to cleave angiotensin-1, angiotensin-2 and angiotensin 1-9. Involved in the degradation of the atrial natriuretic factor (ANF). Displays UV-inducible elastase activity toward skin preelastic and elastic fibers. The polypeptide is Neprilysin (Mus musculus (Mouse)).